The chain runs to 524 residues: Zinc finger CCCH domain-containing protein 37 (524 aa).

The segment at 19-39 (ASTVSPAPPPPQQPLPPKTGL) is disordered. The span at 24–35 (PAPPPPQQPLPP) shows a compositional bias: pro residues. C3H1-type zinc fingers lie at residues 174-202 (RAGE…HPIW), 225-253 (RPGE…HPRE), and 268-296 (RPSE…HPKD). The disordered stretch occupies residues 300–319 (PSSSQDIGSSVGLTSEPDAT). C3H1-type zinc fingers lie at residues 340–368 (RSGE…HPER), 420–448 (RPGQ…HPAD), and 473–501 (REGA…HPPP). A disordered region spans residues 505–524 (MAKTTSEADAAGATNTDTTQ). A compositionally biased stretch (low complexity) spans 512 to 524 (ADAAGATNTDTTQ).

As to quaternary structure, interacts with HEN4. Interacts with FLK and PEP. Highly expressed in inflorescences, at intermediate levels in leaves and stems and at lower levels in roots.

It localises to the nucleus speckle. Functionally, involved in flower development. Functions in floral reproductive organ identity by binding AGAMOUS (AG) pre-mRNA and promoting its processing. Functions in association with HUA2 and HEN4. This chain is Zinc finger CCCH domain-containing protein 37 (HUA1), found in Arabidopsis thaliana (Mouse-ear cress).